The primary structure comprises 756 residues: Zinc finger and BTB domain-containing protein 49 (756 aa).

The region spanning 25–91 (CDCMLVVRGV…MYTSRLDLNQ (67 aa)) is the BTB domain. Disordered stretches follow at residues 176–197 (APSA…GGSC), 226–290 (PSQV…LSEP), and 311–379 (SQQS…PSQA). Positions 226 to 242 (PSQVPATQQPLTRSAST) are enriched in polar residues. Composition is skewed to basic and acidic residues over residues 319-341 (SHPE…DAVE) and 348-365 (AEEK…REEE). C2H2-type zinc fingers lie at residues 386–408 (YACE…KRSH), 414–436 (FECN…LRRH), 442–464 (YICE…IIIH), 470–492 (HLCD…KKTH), 498–520 (FTCD…RVRH), 526–548 (YSCP…VRTH), and 554–576 (YSCE…KRMH).

It belongs to the krueppel C2H2-type zinc-finger protein family. As to quaternary structure, interacts with EP300, KAT5/Tip60 and ZBTB17. The interaction with EP300 is direct and leads to synergistic induction of CDKN1A. On the CDKN1A promoter, forms a complex with ZBTB17; this interaction leads to additive CDKN1A transactivation. The interaction with ZBTB17 may block ZBTB17 repressor activity. Widely expressed, with highest levels in white adipose tissue and kidney, intermediate levels in brain, liver and heart, and lowest levels in spleen, brown adipose tissue and muscle.

Its subcellular location is the cytoplasm. The protein localises to the nucleus. In terms of biological role, transcription factor. Inhibits cell proliferation by activating either CDKN1A/p21 transcription or RB1 transcription. This Mus musculus (Mouse) protein is Zinc finger and BTB domain-containing protein 49 (Zbtb49).